The chain runs to 607 residues: Tyrosine-protein kinase RYK (607 aa).

Residues 1-20 (MRGAARLGRPGRSCLPGARG) are disordered. The first 25 residues, 1-25 (MRGAARLGRPGRSCLPGARGLRAPP), serve as a signal peptide directing secretion. At 26–227 (PPPLLLLLAL…VHAAPTTSTR (202 aa)) the chain is on the extracellular side. One can recognise a WIF domain in the interval 66–194 (LYLSEDEVRR…VLNFKRRKMC (129 aa)). 5 N-linked (GlcNAc...) asparagine glycosylation sites follow: N139, N174, N178, N182, and N209. A disulfide bridge connects residues C159 and C194. A helical membrane pass occupies residues 228–248 (VFYISVGVCCAVIFLVAIILA). Residues 249 to 607 (VLHLHSMKRI…EFHAALGAYV (359 aa)) lie on the Cytoplasmic side of the membrane. A compositionally biased stretch (low complexity) spans 266–282 (ASSSSQGLSQPSTQTTQ). The disordered stretch occupies residues 266-290 (ASSSSQGLSQPSTQTTQYLRADTPN). The Protein kinase domain maps to 330 to 603 (ITLKDVLQEG…QCLTEFHAAL (274 aa)). ATP is bound by residues 336 to 344 (LQEGTFGRI) and K364. D465 (proton acceptor) is an active-site residue. Y495 carries the phosphotyrosine; by autocatalysis modification.

Belongs to the protein kinase superfamily. Tyr protein kinase family. As to quaternary structure, interacts with DVL1 (via PDZ domain). Post-translationally, proteolytically cleaved, in part by presenilin, in response to WNT3 stimulation. Cleavage occurs during neuronal differentiation. In terms of tissue distribution, observed in all the tissues examined.

The protein resides in the membrane. Its subcellular location is the nucleus. It is found in the cytoplasm. It carries out the reaction L-tyrosyl-[protein] + ATP = O-phospho-L-tyrosyl-[protein] + ADP + H(+). In terms of biological role, may be a coreceptor along with FZD8 of Wnt proteins, such as WNT1, WNT3, WNT3A and WNT5A. Involved in neuron differentiation, axon guidance, corpus callosum establishment and neurite outgrowth. In response to WNT3 stimulation, receptor C-terminal cleavage occurs in its transmembrane region and allows the C-terminal intracellular product to translocate from the cytoplasm to the nucleus where it plays a crucial role in neuronal development. The polypeptide is Tyrosine-protein kinase RYK (Homo sapiens (Human)).